Reading from the N-terminus, the 261-residue chain is Phosphatidylglycerol--prolipoprotein diacylglyceryl transferase (261 aa).

A run of 4 helical transmembrane segments spans residues 12 to 32 (ISIR…VYLA), 41 to 61 (IIPD…IVGA), 87 to 107 (GIAG…LYFF), and 112 to 132 (LIHP…AQSI). R134 contributes to the a 1,2-diacyl-sn-glycero-3-phospho-(1'-sn-glycerol) binding site. Helical transmembrane passes span 170-190 (QPTF…IIVL), 200-220 (GEIA…IEGM), and 229-249 (GLRV…GIII).

It belongs to the Lgt family.

Its subcellular location is the cell membrane. It catalyses the reaction L-cysteinyl-[prolipoprotein] + a 1,2-diacyl-sn-glycero-3-phospho-(1'-sn-glycerol) = an S-1,2-diacyl-sn-glyceryl-L-cysteinyl-[prolipoprotein] + sn-glycerol 1-phosphate + H(+). Its pathway is protein modification; lipoprotein biosynthesis (diacylglyceryl transfer). Functionally, catalyzes the transfer of the diacylglyceryl group from phosphatidylglycerol to the sulfhydryl group of the N-terminal cysteine of a prolipoprotein, the first step in the formation of mature lipoproteins. The sequence is that of Phosphatidylglycerol--prolipoprotein diacylglyceryl transferase from Streptococcus sanguinis (strain SK36).